A 493-amino-acid polypeptide reads, in one-letter code: Glutamyl-tRNA(Gln) amidotransferase subunit A (493 aa).

Active-site charge relay system residues include K78 and S158. The Acyl-ester intermediate role is filled by S182.

The protein belongs to the amidase family. GatA subfamily. Heterotrimer of A, B and C subunits.

It carries out the reaction L-glutamyl-tRNA(Gln) + L-glutamine + ATP + H2O = L-glutaminyl-tRNA(Gln) + L-glutamate + ADP + phosphate + H(+). In terms of biological role, allows the formation of correctly charged Gln-tRNA(Gln) through the transamidation of misacylated Glu-tRNA(Gln) in organisms which lack glutaminyl-tRNA synthetase. The reaction takes place in the presence of glutamine and ATP through an activated gamma-phospho-Glu-tRNA(Gln). This chain is Glutamyl-tRNA(Gln) amidotransferase subunit A, found in Rickettsia bellii (strain OSU 85-389).